The following is a 380-amino-acid chain: tRNA-specific 2-thiouridylase MnmA (380 aa).

Residues 26-33 and Leu-52 contribute to the ATP site; that span reads AMSGGVDS. The Nucleophile role is filled by Cys-120. Residues Cys-120 and Cys-217 are joined by a disulfide bond. Gly-144 serves as a coordination point for ATP. The tract at residues 166 to 168 is interaction with tRNA; it reads RDQ. The Cysteine persulfide intermediate role is filled by Cys-217.

The protein belongs to the MnmA/TRMU family.

The protein localises to the cytoplasm. The catalysed reaction is S-sulfanyl-L-cysteinyl-[protein] + uridine(34) in tRNA + AH2 + ATP = 2-thiouridine(34) in tRNA + L-cysteinyl-[protein] + A + AMP + diphosphate + H(+). Its function is as follows. Catalyzes the 2-thiolation of uridine at the wobble position (U34) of tRNA, leading to the formation of s(2)U34. The protein is tRNA-specific 2-thiouridylase MnmA of Jannaschia sp. (strain CCS1).